A 322-amino-acid chain; its full sequence is Elongation factor P--(R)-beta-lysine ligase (322 aa).

72-74 (SPE) serves as a coordination point for substrate. Residues 96–98 (RNN) and Asn-106 each bind ATP. Residue Tyr-115 participates in substrate binding. 241 to 242 (EL) lines the ATP pocket. Glu-248 contacts substrate. Gly-297 serves as a coordination point for ATP.

The protein belongs to the class-II aminoacyl-tRNA synthetase family. EpmA subfamily. In terms of assembly, homodimer.

It catalyses the reaction D-beta-lysine + L-lysyl-[protein] + ATP = N(6)-((3R)-3,6-diaminohexanoyl)-L-lysyl-[protein] + AMP + diphosphate + H(+). Functionally, with EpmB is involved in the beta-lysylation step of the post-translational modification of translation elongation factor P (EF-P). Catalyzes the ATP-dependent activation of (R)-beta-lysine produced by EpmB, forming a lysyl-adenylate, from which the beta-lysyl moiety is then transferred to the epsilon-amino group of a conserved specific lysine residue in EF-P. In Buchnera aphidicola subsp. Baizongia pistaciae (strain Bp), this protein is Elongation factor P--(R)-beta-lysine ligase.